The sequence spans 571 residues: Urease subunit alpha (571 aa).

Residues 133–571 form the Urease domain; the sequence is GGIDTHVHFI…LPLTQRYFLF (439 aa). Ni(2+) is bound by residues histidine 138, histidine 140, and lysine 221. An N6-carboxylysine modification is found at lysine 221. Histidine 223 provides a ligand contact to substrate. Ni(2+)-binding residues include histidine 250 and histidine 276. Residue histidine 324 is the Proton donor of the active site. Aspartate 364 is a Ni(2+) binding site.

The protein belongs to the metallo-dependent hydrolases superfamily. Urease alpha subunit family. Heterotrimer of UreA (gamma), UreB (beta) and UreC (alpha) subunits. Three heterotrimers associate to form the active enzyme. Ni cation is required as a cofactor. Post-translationally, carboxylation allows a single lysine to coordinate two nickel ions.

It localises to the cytoplasm. The catalysed reaction is urea + 2 H2O + H(+) = hydrogencarbonate + 2 NH4(+). The protein operates within nitrogen metabolism; urea degradation; CO(2) and NH(3) from urea (urease route): step 1/1. The sequence is that of Urease subunit alpha from Staphylococcus aureus (strain USA300).